The sequence spans 121 residues: Large ribosomal subunit protein bL20 (121 aa).

This sequence belongs to the bacterial ribosomal protein bL20 family.

Its function is as follows. Binds directly to 23S ribosomal RNA and is necessary for the in vitro assembly process of the 50S ribosomal subunit. It is not involved in the protein synthesizing functions of that subunit. This chain is Large ribosomal subunit protein bL20, found in Chlamydia felis (strain Fe/C-56) (Chlamydophila felis).